The sequence spans 206 residues: Crossover junction endodeoxyribonuclease RuvC (206 aa).

Residues Asp7, Glu67, and Asp138 contribute to the active site. Mg(2+) is bound by residues Asp7, Glu67, and Asp138.

This sequence belongs to the RuvC family. Homodimer which binds Holliday junction (HJ) DNA. The HJ becomes 2-fold symmetrical on binding to RuvC with unstacked arms; it has a different conformation from HJ DNA in complex with RuvA. In the full resolvosome a probable DNA-RuvA(4)-RuvB(12)-RuvC(2) complex forms which resolves the HJ. It depends on Mg(2+) as a cofactor.

It localises to the cytoplasm. It catalyses the reaction Endonucleolytic cleavage at a junction such as a reciprocal single-stranded crossover between two homologous DNA duplexes (Holliday junction).. Its function is as follows. The RuvA-RuvB-RuvC complex processes Holliday junction (HJ) DNA during genetic recombination and DNA repair. Endonuclease that resolves HJ intermediates. Cleaves cruciform DNA by making single-stranded nicks across the HJ at symmetrical positions within the homologous arms, yielding a 5'-phosphate and a 3'-hydroxyl group; requires a central core of homology in the junction. The consensus cleavage sequence is 5'-(A/T)TT(C/G)-3'. Cleavage occurs on the 3'-side of the TT dinucleotide at the point of strand exchange. HJ branch migration catalyzed by RuvA-RuvB allows RuvC to scan DNA until it finds its consensus sequence, where it cleaves and resolves the cruciform DNA. The sequence is that of Crossover junction endodeoxyribonuclease RuvC from Anaeromyxobacter sp. (strain Fw109-5).